Consider the following 887-residue polypeptide: Dystrophin-like protein 1 (887 aa).

A PID domain is found at 30–197; it reads YQHGIHFEAK…KISMQSEDEA (168 aa). Basic and acidic residues-rich tracts occupy residues 176–186 and 205–216; these read MQEKHEDEAAK and IEERGGREEDSR. 5 disordered regions span residues 176-254, 506-606, 641-753, 804-839, and 853-887; these read MQEK…GTAI, EIHH…QYER, QFDM…KNTA, IAEE…PPNT, and NVDR…GYPQ. The segment covering 242–254 has biased composition (polar residues); it reads KPSTTSSSGGTAI. Residues 434 to 506 adopt a coiled-coil conformation; sequence QLMRSQLDQA…QMLETKITSE (73 aa). Positions 510-519 are enriched in low complexity; sequence SSSQPPQHQP. The span at 573-588 shows a compositional bias: basic and acidic residues; the sequence is KESKERRKDEGTRTEP. Residues 597-606 are compositionally biased toward polar residues; sequence DYSSSDQYER. Polar residues-rich tracts occupy residues 816-827 and 863-887; these read NRNNLPSSTNSS and SLLT…GYPQ.

In terms of assembly, component of the dystrophin glycoprotein complex (DGC). Interacts with zyx-1. Expressed in muscles of the head, body wall and vulva. In some animals, weaker expression is observed in the intestinal muscles (at protein level). Isoform a is expressed in lateral neurons SDQL and SDQR.

Its function is as follows. Together with dys-1 and hlh-1, participates in a common muscular function. The sequence is that of Dystrophin-like protein 1 from Caenorhabditis elegans.